Consider the following 310-residue polypeptide: Carbamate kinase 1 (310 aa).

This sequence belongs to the carbamate kinase family.

It localises to the cytoplasm. It carries out the reaction hydrogencarbonate + NH4(+) + ATP = carbamoyl phosphate + ADP + H2O + H(+). The protein operates within metabolic intermediate metabolism; carbamoyl phosphate degradation; CO(2) and NH(3) from carbamoyl phosphate: step 1/1. This chain is Carbamate kinase 1 (arcC1), found in Staphylococcus aureus (strain MRSA252).